We begin with the raw amino-acid sequence, 397 residues long: 8-amino-7-oxononanoate synthase (397 aa).

Arg-24 serves as a coordination point for substrate. 110–111 (GY) is a binding site for pyridoxal 5'-phosphate. A substrate-binding site is contributed by His-135. Positions 183, 211, and 240 each coordinate pyridoxal 5'-phosphate. At Lys-243 the chain carries N6-(pyridoxal phosphate)lysine. Thr-357 serves as a coordination point for substrate.

This sequence belongs to the class-II pyridoxal-phosphate-dependent aminotransferase family. BioF subfamily. In terms of assembly, homodimer. Pyridoxal 5'-phosphate is required as a cofactor.

The catalysed reaction is 6-carboxyhexanoyl-[ACP] + L-alanine + H(+) = (8S)-8-amino-7-oxononanoate + holo-[ACP] + CO2. The protein operates within cofactor biosynthesis; biotin biosynthesis. In terms of biological role, catalyzes the decarboxylative condensation of pimeloyl-[acyl-carrier protein] and L-alanine to produce 8-amino-7-oxononanoate (AON), [acyl-carrier protein], and carbon dioxide. The sequence is that of 8-amino-7-oxononanoate synthase from Hydrogenovibrio crunogenus (strain DSM 25203 / XCL-2) (Thiomicrospira crunogena).